A 552-amino-acid chain; its full sequence is Urocanate hydratase (552 aa).

NAD(+) contacts are provided by residues 49-50, Q127, 173-175, D193, 239-240, 260-264, 270-271, and Y319; these read GG, GMG, NA, QTSAH, and YI. The active site involves C407. G489 contributes to the NAD(+) binding site.

This sequence belongs to the urocanase family. NAD(+) is required as a cofactor.

Its subcellular location is the cytoplasm. The enzyme catalyses 4-imidazolone-5-propanoate = trans-urocanate + H2O. The protein operates within amino-acid degradation; L-histidine degradation into L-glutamate; N-formimidoyl-L-glutamate from L-histidine: step 2/3. Its function is as follows. Catalyzes the conversion of urocanate to 4-imidazolone-5-propionate. The protein is Urocanate hydratase of Bacillus cereus (strain G9842).